The following is a 579-amino-acid chain: Plastidial pyruvate kinase 2 (579 aa).

A chloroplast-targeting transit peptide spans 1–63 (MAQVVATRSI…SRRVVDTTVR (63 aa)). The span at 6 to 24 (ATRSIQGSMLSPNGGSVST) shows a compositional bias: polar residues. Residues 6–26 (ATRSIQGSMLSPNGGSVSTRS) are disordered. Arginine 140 provides a ligand contact to substrate. K(+)-binding residues include asparagine 142, serine 144, aspartate 175, and threonine 176. Residue 142–145 (NMSH) coordinates ATP. Arginine 182 provides a ligand contact to ATP. Lysine 325 is a substrate binding site. Position 327 (glutamate 327) interacts with Mg(2+). The substrate site is built by glycine 350, aspartate 351, and threonine 383. A Mg(2+)-binding site is contributed by aspartate 351.

It belongs to the pyruvate kinase family. In terms of assembly, oligomer of alpha and beta subunits. Mg(2+) is required as a cofactor. The cofactor is K(+). Mostly expressed in seeds, and, to a lower extent, in roots, leaves (veins and trichomes), inflorescences, siliques, pollen (grains and tubes) and flowers (sepals and petals).

The protein resides in the plastid. It is found in the chloroplast stroma. Its subcellular location is the mitochondrion. The catalysed reaction is pyruvate + ATP = phosphoenolpyruvate + ADP + H(+). Its pathway is carbohydrate degradation; glycolysis; pyruvate from D-glyceraldehyde 3-phosphate: step 5/5. Functionally, required for plastidial pyruvate kinase activity. Involved in seed oil accumulation, embryo development and seed storage compounds mobilization upon germination. The protein is Plastidial pyruvate kinase 2 (PKP2) of Arabidopsis thaliana (Mouse-ear cress).